We begin with the raw amino-acid sequence, 783 residues long: Rabenosyn-5 (783 aa).

The residue at position 2 (alanine 2) is an N-acetylalanine. Phosphoserine is present on serine 3. A C2H2-type zinc finger spans residues 14 to 37 (FLCPLCLKDLQSFYQLQSHYEEEH). Positions 99–262 (RSHLSDFKKH…HCKDKLLKRE (164 aa)) are necessary for the correct targeting to endosomes. The FYVE-type zinc-finger motif lies at 156–259 (DQDVPFCPDC…CCTHCKDKLL (104 aa)). Zn(2+)-binding residues include cysteine 162, cysteine 165, cysteine 178, cysteine 181, cysteine 186, and cysteine 189. Positions 206 to 223 (KDSLSTHTSPSQSPNSVH) are enriched in polar residues. A disordered region spans residues 206–240 (KDSLSTHTSPSQSPNSVHGSRRGSISSMSSVSSVL). Phosphoserine is present on residues serine 214, serine 218, serine 225, and serine 229. Over residues 227–239 (RGSISSMSSVSSV) the composition is skewed to low complexity. Zn(2+)-binding residues include cysteine 251 and cysteine 254. Residues 263–499 (QQMDEKEHTP…QLQDEYDQQQ (237 aa)) are necessary for interaction with RAB4A. Residues 263–783 (QQMDEKEHTP…TLAKQKGAPN (521 aa)) form a necessary for interaction with EHD1 region. Coiled coils occupy residues 377 to 412 (TKEQFEELKKKRKQDLEQKRTVERQAALESRRKLEE) and 471 to 531 (QAKA…ELER). Composition is skewed to basic and acidic residues over residues 387 to 399 (KRKQDLEQKRTVE) and 405 to 414 (ESRRKLEERQ). Residues 387–433 (KRKQDLEQKRTVERQAALESRRKLEERQSGLASHTANGDVRSLRGIP) form a disordered region. The region spanning 495–514 (YDQQQTEKAIELSRKQAEEE) is the UIM domain. Disordered regions lie at residues 569–638 (SYSL…SPTE) and 663–733 (FEED…EEHI). 2 stretches are compositionally biased toward polar residues: residues 571 to 584 (SLDQDSSPVQSSTA) and 610 to 623 (TLPQSTMSQQSDKA). Residues 627–783 (PFDEDDLSSP…TLAKQKGAPN (157 aa)) are necessary for interaction with RAB5A. Acidic residues predominate over residues 663-673 (FEEDAEEEEVA). Residue serine 686 is modified to Phosphoserine. Residues 721–733 (VDSDSGMEAEEHI) are compositionally biased toward acidic residues.

Interacts with EHD1, RAB4A, RAB5A, RAB22A, RAB24 and VPS45. Binds simultaneously to RAB4A and RAB5A in vitro. Interacts with RAB4A and RAB5A that has been activated by GTP binding.

The protein localises to the cell membrane. It is found in the early endosome membrane. Functionally, rab4/Rab5 effector protein acting in early endocytic membrane fusion and membrane trafficking of recycling endosomes. Required for endosome fusion either homotypically or with clathrin coated vesicles. Plays a role in the lysosomal trafficking of CTSD/cathepsin D from the Golgi to lysosomes. Also promotes the recycling of transferrin directly from early endosomes to the plasma membrane. Binds phospholipid vesicles containing phosphatidylinositol 3-phosphate (PtdInsP3). Plays a role in the recycling of transferrin receptor to the plasma membrane. The protein is Rabenosyn-5 of Mus musculus (Mouse).